Here is a 29-residue protein sequence, read N- to C-terminus: NADH dehydrogenase [ubiquinone] 1 beta subcomplex subunit 10 (29 aa).

A disordered region spans residues 1–29 (GRKKGVQFDEGAPDDFDPNNPYKKDVAFL).

Belongs to the complex I NDUFB10 subunit family. In terms of assembly, complex I is composed of about 45 different subunits.

It localises to the mitochondrion inner membrane. Accessory subunit of the mitochondrial membrane respiratory chain NADH dehydrogenase (Complex I), that is believed not to be involved in catalysis. Complex I functions in the transfer of electrons from NADH to the respiratory chain. The immediate electron acceptor for the enzyme is believed to be ubiquinone. In Solanum tuberosum (Potato), this protein is NADH dehydrogenase [ubiquinone] 1 beta subcomplex subunit 10.